The primary structure comprises 316 residues: Ribosomal RNA small subunit methyltransferase H (316 aa).

Residues 35 to 37 (SGH), D55, F84, D105, and Q112 each bind S-adenosyl-L-methionine.

The protein belongs to the methyltransferase superfamily. RsmH family.

It localises to the cytoplasm. The enzyme catalyses cytidine(1402) in 16S rRNA + S-adenosyl-L-methionine = N(4)-methylcytidine(1402) in 16S rRNA + S-adenosyl-L-homocysteine + H(+). Its function is as follows. Specifically methylates the N4 position of cytidine in position 1402 (C1402) of 16S rRNA. This is Ribosomal RNA small subunit methyltransferase H from Streptococcus pyogenes serotype M18 (strain MGAS8232).